Reading from the N-terminus, the 346-residue chain is Aspartate-semialdehyde dehydrogenase (346 aa).

NADP(+) contacts are provided by residues serine 12–valine 15 and arginine 40–serine 41. A phosphate-binding site is contributed by arginine 101. Cysteine 131 (acyl-thioester intermediate) is an active-site residue. Glutamine 158 provides a ligand contact to substrate. An NADP(+)-binding site is contributed by serine 161–glycine 162. Residue lysine 225 participates in phosphate binding. Arginine 246 is a substrate binding site. Catalysis depends on histidine 253, which acts as the Proton acceptor. Glutamine 326 contacts NADP(+).

The protein belongs to the aspartate-semialdehyde dehydrogenase family. In terms of assembly, homodimer.

It carries out the reaction L-aspartate 4-semialdehyde + phosphate + NADP(+) = 4-phospho-L-aspartate + NADPH + H(+). The protein operates within amino-acid biosynthesis; L-lysine biosynthesis via DAP pathway; (S)-tetrahydrodipicolinate from L-aspartate: step 2/4. Its pathway is amino-acid biosynthesis; L-methionine biosynthesis via de novo pathway; L-homoserine from L-aspartate: step 2/3. It functions in the pathway amino-acid biosynthesis; L-threonine biosynthesis; L-threonine from L-aspartate: step 2/5. Functionally, catalyzes the NADPH-dependent formation of L-aspartate-semialdehyde (L-ASA) by the reductive dephosphorylation of L-aspartyl-4-phosphate. The polypeptide is Aspartate-semialdehyde dehydrogenase (Helicobacter pylori (strain J99 / ATCC 700824) (Campylobacter pylori J99)).